A 213-amino-acid chain; its full sequence is Ribosomal RNA large subunit methyltransferase E (213 aa).

S-adenosyl-L-methionine-binding residues include Gly-68, Trp-70, Asp-88, Asp-104, and Asp-127. Residue Lys-167 is the Proton acceptor of the active site.

Belongs to the class I-like SAM-binding methyltransferase superfamily. RNA methyltransferase RlmE family.

The protein localises to the cytoplasm. The catalysed reaction is uridine(2552) in 23S rRNA + S-adenosyl-L-methionine = 2'-O-methyluridine(2552) in 23S rRNA + S-adenosyl-L-homocysteine + H(+). Specifically methylates the uridine in position 2552 of 23S rRNA at the 2'-O position of the ribose in the fully assembled 50S ribosomal subunit. This Neorickettsia sennetsu (strain ATCC VR-367 / Miyayama) (Ehrlichia sennetsu) protein is Ribosomal RNA large subunit methyltransferase E.